Here is a 125-residue protein sequence, read N- to C-terminus: Cystatin-like cysteine protease inhibitor EPIC2A (125 aa).

The first 21 residues, 1–21 (MSFLRPTLALLAVTALVTTSA), serve as a signal peptide directing secretion. The N-linked (GlcNAc...) asparagine glycan is linked to asparagine 45. Positions 68-72 (QVVSG) match the Secondary area of contact motif.

The protein belongs to the cystatin family.

It localises to the secreted. Functionally, secreted effector that interacts with and inhibits host apoplastic pathogenesis-related papain-like cysteine proteases. Inhibition of host proteases by a pathogen extracellular protease inhibitor forms a specific type of defense-counterdefense mechanism between plants and microbial pathogens. This Phytophthora infestans (strain T30-4) (Potato late blight agent) protein is Cystatin-like cysteine protease inhibitor EPIC2A.